Reading from the N-terminus, the 140-residue chain is Nucleoside diphosphate kinase (140 aa).

Residues Lys-11, Phe-59, Arg-87, Thr-93, Arg-104, and Asn-114 each contribute to the ATP site. The active-site Pros-phosphohistidine intermediate is His-117.

Belongs to the NDK family. In terms of assembly, homotetramer. It depends on Mg(2+) as a cofactor.

The protein resides in the cytoplasm. The catalysed reaction is a 2'-deoxyribonucleoside 5'-diphosphate + ATP = a 2'-deoxyribonucleoside 5'-triphosphate + ADP. It carries out the reaction a ribonucleoside 5'-diphosphate + ATP = a ribonucleoside 5'-triphosphate + ADP. Its function is as follows. Major role in the synthesis of nucleoside triphosphates other than ATP. The ATP gamma phosphate is transferred to the NDP beta phosphate via a ping-pong mechanism, using a phosphorylated active-site intermediate. This chain is Nucleoside diphosphate kinase, found in Ruegeria sp. (strain TM1040) (Silicibacter sp.).